A 1819-amino-acid polypeptide reads, in one-letter code: U3 small nucleolar RNA-associated protein 10 (1819 aa).

Residues 1779–1817 form an HEAT repeat; sequence LIPYIAELLEDDDEDVELEVRKGLVKVLENVLGEPLDRY.

It belongs to the HEATR1/UTP10 family. Component of the ribosomal small subunit (SSU) processome.

It is found in the nucleus. Its subcellular location is the nucleolus. Involved in nucleolar processing of pre-18S ribosomal RNA. Involved in ribosome biosynthesis. This chain is U3 small nucleolar RNA-associated protein 10, found in Meyerozyma guilliermondii (strain ATCC 6260 / CBS 566 / DSM 6381 / JCM 1539 / NBRC 10279 / NRRL Y-324) (Yeast).